A 200-amino-acid polypeptide reads, in one-letter code: Cytochrome c biogenesis ATP-binding export protein CcmA (200 aa).

In terms of domain architecture, ABC transporter spans 1–200 (MRLSGRGLRC…TREMRIGAAA (200 aa)). 35 to 42 (GRNGAGKT) serves as a coordination point for ATP.

It belongs to the ABC transporter superfamily. CcmA exporter (TC 3.A.1.107) family. As to quaternary structure, the complex is composed of two ATP-binding proteins (CcmA) and two transmembrane proteins (CcmB).

The protein resides in the cell inner membrane. It catalyses the reaction heme b(in) + ATP + H2O = heme b(out) + ADP + phosphate + H(+). Its function is as follows. Part of the ABC transporter complex CcmAB involved in the biogenesis of c-type cytochromes; once thought to export heme, this seems not to be the case, but its exact role is uncertain. Responsible for energy coupling to the transport system. The sequence is that of Cytochrome c biogenesis ATP-binding export protein CcmA from Rhodopseudomonas palustris (strain HaA2).